The primary structure comprises 414 residues: Cytochrome c-554 (414 aa).

A signal peptide spans 1–24 (MQSSRPSDRQLAIVVSVAVGIVVA). Heme-binding residues include Met110, Cys131, Cys134, His135, Met154, Cys179, Cys182, His183, Met283, Cys294, Cys297, His298, Cys378, Cys381, and His382.

In terms of processing, binds 4 heme groups per subunit. The N-terminus is blocked.

The protein localises to the periplasm. Functionally, serves as the immediate electron donor to the oxidized BChl2 (bacteriochlorophyll dimer) that is oxidized in the first step of light-induced charge separation. Can also oxidize low-potential substrates. The protein is Cytochrome c-554 (puf2C) of Chloroflexus aurantiacus (strain ATCC 29366 / DSM 635 / J-10-fl).